The sequence spans 55 residues: MKYQLLKIIVCPVCHSKLSFDLEKKELICNVDNLAFPIRKGIPVLLKRDARNFIL.

This sequence belongs to the UPF0434 family.

This is UPF0434 protein BPEN_388 from Blochmanniella pennsylvanica (strain BPEN).